Reading from the N-terminus, the 409-residue chain is DEP domain-containing mTOR-interacting protein (409 aa).

M1 carries the post-translational modification N-acetylmethionine. The segment at 1-25 (MEEGGSTGSAGSDSSTSGSGGAQQR) is disordered. DEP domains lie at 36 to 119 (TGEQ…RFRK) and 145 to 219 (SPEN…QFRM). Residues 217-235 (FRMNFRRRRRLMELLNEKS) carry the DDEX motif motif. S235 carries the post-translational modification Phosphoserine; by MAPK3. Residue T241 is modified to Phosphothreonine. S244 and S258 each carry phosphoserine. T259 carries the post-translational modification Phosphothreonine. S263, S265, S280, S282, and S283 each carry phosphoserine. Phosphoserine; by CK1 is present on residues S286 and S287. The BetaTrCP degron motif motif lies at 286–291 (SSGYFS). Residue Y289 is modified to Phosphotyrosine; by SYK. S291 carries the post-translational modification Phosphoserine; by CK1. S293 carries the post-translational modification Phosphoserine; by MTOR. T295 is modified (phosphothreonine; by MTOR). A phosphoserine mark is found at S297 and S298. S299 is modified (phosphoserine; by MTOR). A PDZ domain is found at 330 to 407 (TFTIVGDAVG…TIVMEVMEEL (78 aa)).

Associated component of the mechanistic target of rapamycin complex 1 (mTORC1) which contains MTOR, MLST8 and RPTOR. Associated component of the mechanistic target of rapamycin complex 2 (mTORC2) which contains MTOR, MLST8, PROTOR1, RICTOR, MAPKAP1 and DEPTOR. Interacts (via PDZ domain) with MTOR; interacts with MTOR within both mTORC1 and mTORC2. Interacts (via PDZ domain) with MINAR1 (via N-terminus). Interacts with SIK3. In terms of processing, phosphorylation weakens interaction with MTOR within mTORC1 and mTORC2. Phosphorylated at Ser-286, Ser-287 and Ser-291 in response to mitogenic stimulation by MTOR: DEPTOR is either directly phosphorylated by MTOR or indirectly via proteins kinases that are activated by MTOR, such as CK1/CSNK1A1. Phosphorylation at Ser-286, Ser-287 and Ser-291 promotes ubiquitination by the SCF(BTRC) complex, followed by degradation. Phosphorylation at Ser-235 by MAPK3/ERK1 promotes deubiquitination by USP7, enhancing its stability. Phosphorylation at Tyr-289 by SYK impairs its interaction with MTOR, promoting mTORC1 and mTORC2 signaling. Ubiquitinated; leading to proteasomal degradation. Ubiquitination by the SCF(BTRC) and SCF(FBXW11) complexes following phosphorylation at Ser-286, Ser-287 and Ser-291 by MTOR, leads to its degradation by the proteasome. Deubiquitinated by OTUB1 in response to amino acid via a non-canonical mechanism, leading to DEPTOR stability. Deubiquitinated by USP7 following phosphorylation at Ser-235, promoting its stability.

The protein resides in the lysosome membrane. Inhibited upon phosphatidic acid-binding: phosphatidic acid produced upon mitogenic stimulation promotes DEPTOR dissociatiom from the mTORC1 and mTORC2 complexes, leading to their activation. Specifically binds unsaturated phosphatidic acid, such as 16:0-18:1, 18:0-18:1 and di-18:1. Inhibited when nutrients are present via a feedback loop: phosphorylation by MTOR promotes DEPTOR ubiquitination and degradation. In terms of biological role, negative regulator of the mTORC1 and mTORC2 complexes: inhibits the protein kinase activity of MTOR, thereby inactivating both complexes. DEPTOR inhibits mTORC1 and mTORC2 to induce autophagy. In contrast to AKT1S1/PRAS40, only partially inhibits mTORC1 activity. This chain is DEP domain-containing mTOR-interacting protein, found in Homo sapiens (Human).